We begin with the raw amino-acid sequence, 511 residues long: Maturase K (511 aa).

This sequence belongs to the intron maturase 2 family. MatK subfamily.

Its subcellular location is the plastid. The protein resides in the chloroplast. Usually encoded in the trnK tRNA gene intron. Probably assists in splicing its own and other chloroplast group II introns. This is Maturase K from Mandragora officinarum (Mandrake).